Consider the following 259-residue polypeptide: Ribosomal RNA large subunit methyltransferase E (259 aa).

G49, W51, D69, D88, and D112 together coordinate S-adenosyl-L-methionine. The Proton acceptor role is filled by K152. Residues 199-257 enclose the TRAM domain; it reads PIAEGDEHTVEIVDTGDEGDGIARIEGYTLFVDDAAEGDTVDVTVTDLKPNYGFAERRD.

The protein belongs to the class I-like SAM-binding methyltransferase superfamily. RNA methyltransferase RlmE family.

Its subcellular location is the cytoplasm. The catalysed reaction is uridine(2552) in 23S rRNA + S-adenosyl-L-methionine = 2'-O-methyluridine(2552) in 23S rRNA + S-adenosyl-L-homocysteine + H(+). Its function is as follows. Specifically methylates the uridine in position 2552 of 23S rRNA at the 2'-O position of the ribose in the fully assembled 50S ribosomal subunit. The protein is Ribosomal RNA large subunit methyltransferase E of Halobacterium salinarum (strain ATCC 29341 / DSM 671 / R1).